The chain runs to 310 residues: Glutaminase (310 aa).

Positions 66, 117, 161, 168, 192, 244, and 262 each coordinate substrate.

The protein belongs to the glutaminase family. In terms of assembly, homotetramer.

The catalysed reaction is L-glutamine + H2O = L-glutamate + NH4(+). The sequence is that of Glutaminase from Desulfovibrio desulfuricans (strain ATCC 27774 / DSM 6949 / MB).